A 230-amino-acid polypeptide reads, in one-letter code: MNLNLNSIFGQFSPDLVLFIPMTLTAVFLNLSWLSISNPSNWLPSRANLLILSFYQEVLKILFQQTNPNTAPWVSAFTAIFILIFSINVLGLLPYAFTSTSHISLTYSIGVPLWMSVNILGFYLAFNSRLGHLVPQGTPSYLIPFMVIIETISLFAQPIALGLRLAANLTAGHLLIFLLSTAIWTLSSSPSIASITLLIFFFLFLLEIGVACIQAYVFTALVNFYLSQNL.

6 consecutive transmembrane segments (helical) span residues 16 to 36, 73 to 93, 106 to 126, 142 to 162, 165 to 185, and 192 to 212; these read LVLF…WLSI, WVSA…LGLL, TYSI…YLAF, LIPF…IALG, LAAN…AIWT, and IASI…GVAC.

Belongs to the ATPase A chain family. In terms of assembly, F-type ATPases have 2 components, CF(1) - the catalytic core - and CF(0) - the membrane proton channel. CF(1) has five subunits: alpha(3), beta(3), gamma(1), delta(1), epsilon(1). CF(0) has three main subunits: a, b and c.

It is found in the mitochondrion inner membrane. Functionally, mitochondrial membrane ATP synthase (F(1)F(0) ATP synthase or Complex V) produces ATP from ADP in the presence of a proton gradient across the membrane which is generated by electron transport complexes of the respiratory chain. F-type ATPases consist of two structural domains, F(1) - containing the extramembraneous catalytic core and F(0) - containing the membrane proton channel, linked together by a central stalk and a peripheral stalk. During catalysis, ATP synthesis in the catalytic domain of F(1) is coupled via a rotary mechanism of the central stalk subunits to proton translocation. Key component of the proton channel; it may play a direct role in the translocation of protons across the membrane. This chain is ATP synthase subunit a (ATP6), found in Patiria pectinifera (Starfish).